Here is a 420-residue protein sequence, read N- to C-terminus: Vasopressin V1a receptor (420 aa).

The tract at residues 1–20 is disordered; the sequence is MSFPRGSYDPAASNSSPWWP. Residues 1–54 are Extracellular-facing; it reads MSFPRGSYDPAASNSSPWWPLSAEDANSSWEAAGHQKGSDPSGDVRNEELAKLE. Residue N27 is glycosylated (N-linked (GlcNAc...) asparagine). Residues 55 to 75 traverse the membrane as a helical segment; it reads IAVLAVIFVVAVLGNSSVLLA. The Cytoplasmic segment spans residues 76-92; the sequence is LHRTPRKTSRMHLFIRH. Residues 93–113 traverse the membrane as a helical segment; it reads LSLADLAVAFFQVLPQLCWDI. The Extracellular portion of the chain corresponds to 114–125; that stretch reads TYRFRGPDWLCR. A disulfide bond links C124 and C205. A helical membrane pass occupies residues 126-146; that stretch reads VVKHLQVFAMFASAYMLVVMT. The Cytoplasmic segment spans residues 147–168; the sequence is ADRYIAVCHPLKTLQQPTRRSR. The chain crosses the membrane as a helical span at residues 169–189; the sequence is LMIAASWVLSFLLSTPQYFIF. The Extracellular portion of the chain corresponds to 190–225; the sequence is SMIEIEVNNGTKTQDCWATFIQPWGTRAYVTWMTSG. An N-linked (GlcNAc...) asparagine glycan is attached at N198. The helical transmembrane segment at 226–246 threads the bilayer; that stretch reads VFVVPVVILGTCYGFICYHIW. Residues 247-294 lie on the Cytoplasmic side of the membrane; it reads RNVRGKTASRQSKGSGEDVAPFHKGLLVTPCVSSVKTISRAKIRTVKM. A helical transmembrane segment spans residues 295–315; the sequence is TFVIVTAYILCWAPFFIVQMW. Residues 316-331 lie on the Extracellular side of the membrane; it reads SVWDDNFIWTDSENPS. Residues 332–352 form a helical membrane-spanning segment; that stretch reads ITITALLASLNSCCNPWIYMF. The Cytoplasmic portion of the chain corresponds to 353–420; that stretch reads FSGHLLQDCV…RSIRFIPVST (68 aa). S-palmitoyl cysteine attachment occurs at residues C367 and C368. Positions 379–411 are disordered; it reads DSDNMSRRHTSYSNNRSPTNSTGTWKDSPKSSR. Positions 389–403 are enriched in polar residues; sequence SYSNNRSPTNSTGTW. S406 carries the phosphoserine modification.

The protein belongs to the G-protein coupled receptor 1 family. Vasopressin/oxytocin receptor subfamily.

It localises to the cell membrane. Its function is as follows. Receptor for arginine vasopressin. The activity of this receptor is mediated by G proteins which activate a phosphatidyl-inositol-calcium second messenger system. Involved in social memory formation. This Microtus ochrogaster (Prairie vole) protein is Vasopressin V1a receptor (Avpr1a).